Here is a 699-residue protein sequence, read N- to C-terminus: Elongation factor G (699 aa).

One can recognise a tr-type G domain in the interval Glu-8 to Val-290. Residues Ala-17–Thr-24, Asp-88–His-92, and Asn-142–Asp-145 each bind GTP.

This sequence belongs to the TRAFAC class translation factor GTPase superfamily. Classic translation factor GTPase family. EF-G/EF-2 subfamily.

The protein localises to the cytoplasm. Its function is as follows. Catalyzes the GTP-dependent ribosomal translocation step during translation elongation. During this step, the ribosome changes from the pre-translocational (PRE) to the post-translocational (POST) state as the newly formed A-site-bound peptidyl-tRNA and P-site-bound deacylated tRNA move to the P and E sites, respectively. Catalyzes the coordinated movement of the two tRNA molecules, the mRNA and conformational changes in the ribosome. The protein is Elongation factor G of Alkalilimnicola ehrlichii (strain ATCC BAA-1101 / DSM 17681 / MLHE-1).